The chain runs to 122 residues: Large ribosomal subunit protein uL14 (122 aa).

This sequence belongs to the universal ribosomal protein uL14 family. Part of the 50S ribosomal subunit. Forms a cluster with proteins L3 and L19. In the 70S ribosome, L14 and L19 interact and together make contacts with the 16S rRNA in bridges B5 and B8.

In terms of biological role, binds to 23S rRNA. Forms part of two intersubunit bridges in the 70S ribosome. The polypeptide is Large ribosomal subunit protein uL14 (Rickettsia massiliae (strain Mtu5)).